The sequence spans 233 residues: Demethylmenaquinone methyltransferase (233 aa).

Residues T58, D79, and 106–107 each bind S-adenosyl-L-methionine; that span reads NA.

This sequence belongs to the class I-like SAM-binding methyltransferase superfamily. MenG/UbiE family.

It catalyses the reaction a 2-demethylmenaquinol + S-adenosyl-L-methionine = a menaquinol + S-adenosyl-L-homocysteine + H(+). It functions in the pathway quinol/quinone metabolism; menaquinone biosynthesis; menaquinol from 1,4-dihydroxy-2-naphthoate: step 2/2. Methyltransferase required for the conversion of demethylmenaquinol (DMKH2) to menaquinol (MKH2). The sequence is that of Demethylmenaquinone methyltransferase from Bacillus subtilis (strain 168).